Reading from the N-terminus, the 171-residue chain is 3-hydroxydecanoyl-[acyl-carrier-protein] dehydratase (171 aa).

H70 is an active-site residue.

It belongs to the thioester dehydratase family. FabA subfamily. Homodimer.

The protein localises to the cytoplasm. It catalyses the reaction a (3R)-hydroxyacyl-[ACP] = a (2E)-enoyl-[ACP] + H2O. The catalysed reaction is (3R)-hydroxydecanoyl-[ACP] = (2E)-decenoyl-[ACP] + H2O. It carries out the reaction (2E)-decenoyl-[ACP] = (3Z)-decenoyl-[ACP]. It participates in lipid metabolism; fatty acid biosynthesis. Its function is as follows. Necessary for the introduction of cis unsaturation into fatty acids. Catalyzes the dehydration of (3R)-3-hydroxydecanoyl-ACP to E-(2)-decenoyl-ACP and then its isomerization to Z-(3)-decenoyl-ACP. Can catalyze the dehydratase reaction for beta-hydroxyacyl-ACPs with saturated chain lengths up to 16:0, being most active on intermediate chain length. The protein is 3-hydroxydecanoyl-[acyl-carrier-protein] dehydratase of Shewanella sp. (strain MR-4).